The following is a 319-amino-acid chain: MARKKIALVGAGNIGGTLAHLALLKQLGDVVLFDIAQGMPNGKALDLLQTCPIEGVDFKVRGTNDYKDLENSDVVIVTAGVPRKPGMSRDDLLGINIKVMQTVGEGIKHNCPNAFVICITNPLDIMVNMLQKFSGVPDNKIVGMAGVLDSARFRTFLADELNVSVQQVQAYVMGGHGDTMVPLTKMSNVAGVSLEQLVKEGKLKQERLDAIVSRTRSGGGEIVALLKTGSAYYAPAAAGIQMAESFLKDKKMILPCAAKVKAGMYGLDEDLFVGVPTEISANGVRPIEVEISDKEREQLQVSINAVKDLNKAAAEILAK.

NAD(+) contacts are provided by residues 10 to 15 (GAGNIG) and Asp34. Residues Arg83 and Arg89 each coordinate substrate. NAD(+) contacts are provided by residues Asn96 and 119 to 121 (ITN). Residues Asn121 and Arg152 each contribute to the substrate site. His176 (proton acceptor) is an active-site residue.

It belongs to the LDH/MDH superfamily. MDH type 3 family.

It carries out the reaction (S)-malate + NAD(+) = oxaloacetate + NADH + H(+). Functionally, catalyzes the reversible oxidation of malate to oxaloacetate. The polypeptide is Malate dehydrogenase (Francisella novicida).